A 361-amino-acid chain; its full sequence is Protein RecA (361 aa).

ATP is bound at residue glycine 77–threonine 84.

Belongs to the RecA family.

It localises to the cytoplasm. In terms of biological role, can catalyze the hydrolysis of ATP in the presence of single-stranded DNA, the ATP-dependent uptake of single-stranded DNA by duplex DNA, and the ATP-dependent hybridization of homologous single-stranded DNAs. It interacts with LexA causing its activation and leading to its autocatalytic cleavage. The sequence is that of Protein RecA from Sinorhizobium fredii (strain NBRC 101917 / NGR234).